The primary structure comprises 1037 residues: Ras guanine nucleotide exchange factor E (1037 aa).

A coiled-coil region spans residues 5–35 (ECNNRIEYLQNKVLELESLNENLKGQLEYFQ). Disordered stretches follow at residues 65-100 (NNNN…TTNN), 114-150 (TNSN…ELSN), 166-387 (TTTT…PLSN), 414-437 (TVNM…LYHS), 451-472 (SSLS…LTNP), 602-628 (INSN…NQLE), 907-935 (NTTT…QQLN), and 1004-1037 (EKET…SFKS). Low complexity-rich tracts occupy residues 114–145 (TNSN…NNSN) and 166–200 (TTTT…NNNN). Polar residues predominate over residues 229–239 (PTSSRNSPTNK). A compositionally biased stretch (low complexity) spans 240–276 (SSPQFLSPLSKSPLSQSTQSTTVSSPSPSWTTTVPQS). The span at 282–300 (TIVQSKSPYSPDTNISNKL) shows a compositional bias: polar residues. A compositionally biased stretch (low complexity) spans 318–360 (SPSKNSPRSLNSNNNNSSATTSITTPPTTSTPTPTTSTTTTTT). A compositionally biased stretch (basic and acidic residues) spans 361-370 (TERRPEDRRS). Composition is skewed to polar residues over residues 372 to 387 (TSPF…PLSN) and 424 to 437 (PRSN…LYHS). The 199-residue stretch at 496-694 (NGFIVKGGTI…NLKRLLTNDR (199 aa)) folds into the N-terminal Ras-GEF domain. A Ras-GEF domain is found at 726-1003 (DPTEIARQLT…YKLSLICEPK (278 aa)). Residues 907–930 (NTTTTTTTTTTTTTTNTTTSNNNN) show a composition bias toward low complexity. Residues 1027-1037 (SVTSLLNSFKS) show a composition bias toward polar residues.

Functionally, promotes the exchange of Ras-bound GDP by GTP. Seems to play a role in chemotaxis. The protein is Ras guanine nucleotide exchange factor E (gefE) of Dictyostelium discoideum (Social amoeba).